We begin with the raw amino-acid sequence, 92 residues long: Cell division protein FtsB (92 aa).

Topologically, residues 1–3 are cytoplasmic; it reads MRL. The chain crosses the membrane as a helical span at residues 4–21; it reads FIFLLVAVLLLFQYDFWF. The Periplasmic portion of the chain corresponds to 22-92; sequence GKNGYLDYKR…IFYHIVKEQK (71 aa). Positions 26–74 form a coiled coil; that stretch reads YLDYKRTAQQIAQHKQENEKLSQRNQVVAAEIKDLKQGVEAIEERARFQ.

It belongs to the FtsB family. Part of a complex composed of FtsB, FtsL and FtsQ.

The protein resides in the cell inner membrane. Its function is as follows. Essential cell division protein. May link together the upstream cell division proteins, which are predominantly cytoplasmic, with the downstream cell division proteins, which are predominantly periplasmic. The sequence is that of Cell division protein FtsB from Pasteurella multocida (strain Pm70).